A 173-amino-acid chain; its full sequence is Small ribosomal subunit protein mS25 (173 aa).

It belongs to the mitochondrion-specific ribosomal protein mS25 family. As to quaternary structure, component of the mitochondrial small ribosomal subunit (mt-SSU). Mature mammalian 55S mitochondrial ribosomes consist of a small (28S) and a large (39S) subunit. The 28S small subunit contains a 12S ribosomal RNA (12S mt-rRNA) and 30 different proteins. The 39S large subunit contains a 16S rRNA (16S mt-rRNA), a copy of mitochondrial valine transfer RNA (mt-tRNA(Val)), which plays an integral structural role, and 52 different proteins.

The protein localises to the mitochondrion. In Homo sapiens (Human), this protein is Small ribosomal subunit protein mS25 (MRPS25).